The primary structure comprises 235 residues: MDRPVIVALDLDNEEQLNKILSKLGDPHDVFVKVGMELFYNAGIDVIKKLTQQGYKIFLDLKMHDIPNTVYNGAKALAKLGITFTTVHALGGSQMIKSAKDGLIAGTPAGHSVPKLLAVTELTSISDDVLRNEQNCRLPMAEQVLSLAKMAKHSGADGVICSPLEVKKLHENIGDDFLYVTPGIRPAGNAKDDQSRVATPKMAKEWGSSAIVVGRPITLASDPKAAYEAIKKEFN.

Substrate is bound by residues Asp-10, Lys-33, 60 to 69 (DLKMHDIPNT), Thr-123, Arg-185, Gln-194, Gly-214, and Arg-215. Lys-62 (proton donor) is an active-site residue.

This sequence belongs to the OMP decarboxylase family. Type 1 subfamily. In terms of assembly, homodimer.

The catalysed reaction is orotidine 5'-phosphate + H(+) = UMP + CO2. It functions in the pathway pyrimidine metabolism; UMP biosynthesis via de novo pathway; UMP from orotate: step 2/2. Its function is as follows. Catalyzes the decarboxylation of orotidine 5'-monophosphate (OMP) to uridine 5'-monophosphate (UMP). This is Orotidine 5'-phosphate decarboxylase from Lactobacillus acidophilus (strain ATCC 700396 / NCK56 / N2 / NCFM).